A 589-amino-acid chain; its full sequence is Glutamine--fructose-6-phosphate aminotransferase [isomerizing] (589 aa).

C2 (nucleophile; for GATase activity) is an active-site residue. The 220-residue stretch at C2 to E221 folds into the Glutamine amidotransferase type-2 domain. 2 SIS domains span residues V286–K426 and I445–P579. Catalysis depends on K584, which acts as the For Fru-6P isomerization activity.

In terms of assembly, homodimer.

The protein localises to the cytoplasm. The enzyme catalyses D-fructose 6-phosphate + L-glutamine = D-glucosamine 6-phosphate + L-glutamate. In terms of biological role, catalyzes the first step in hexosamine metabolism, converting fructose-6P into glucosamine-6P using glutamine as a nitrogen source. The chain is Glutamine--fructose-6-phosphate aminotransferase [isomerizing] from Sulfurisphaera tokodaii (strain DSM 16993 / JCM 10545 / NBRC 100140 / 7) (Sulfolobus tokodaii).